The primary structure comprises 352 residues: Vacuolar protein sorting-associated protein 37C (352 aa).

Phosphoserine is present on serine 29. Residues 78–167 enclose the VPS37 C-terminal domain; that stretch reads VERCQEQKAK…RRPRALPELA (90 aa). Residues 162–352 are disordered; sequence ALPELAGDVP…HPPGPAWPRY (191 aa). 3 stretches are compositionally biased toward pro residues: residues 173 to 185, 202 to 213, and 319 to 336; these read KRPP…PQAT, YPLPYSPSPGLP, and PGQP…PPGT.

This sequence belongs to the VPS37 family. As to quaternary structure, component of the ESCRT-I complex (endosomal sorting complex required for transport I) which consists of TSG101, VPS28, a VPS37 protein (VPS37A to -D) and MVB12A or MVB12B in a 1:1:1:1 stoichiometry. Interacts with TSG101, VPS28, MVB12A and MVB12B. Component of the ESCRT-I complex (endosomal sorting complex required for transport I) which consists of TSG101, VPS28, a VPS37 protein (VPS37A to -D) and UBAP1 in a 1:1:1:1 stoichiometry. Interacts with HGS and STAM2. Interacts with CEP55. Phosphorylated by TBK1.

It is found in the late endosome membrane. Its function is as follows. Component of the ESCRT-I complex, a regulator of vesicular trafficking process. Required for the sorting of endocytic ubiquitinated cargos into multivesicular bodies. May be involved in cell growth and differentiation. This Mus musculus (Mouse) protein is Vacuolar protein sorting-associated protein 37C (Vps37c).